A 307-amino-acid chain; its full sequence is Putative oxidoreductase YceM (307 aa).

This sequence belongs to the Gfo/Idh/MocA family.

This Escherichia coli (strain K12) protein is Putative oxidoreductase YceM (yceM).